We begin with the raw amino-acid sequence, 941 residues long: Cell wall protein IFF9 (941 aa).

The first 20 residues, 1–20 (MQLFQNILVSIALLTQIVFA), serve as a signal peptide directing secretion. A lipid anchor (GPI-anchor amidated asparagine) is attached at N917. A propeptide spans 918 to 941 (GSNKESIENIKYLALVVFGLMMFM) (removed in mature form).

It belongs to the HYR1/IFF family. Post-translationally, the GPI-anchor is attached to the protein in the endoplasmic reticulum and serves to target the protein to the cell surface. There, the glucosamine-inositol phospholipid moiety is cleaved off and the GPI-modified mannoprotein is covalently attached via its lipidless GPI glycan remnant to the 1,6-beta-glucan of the outer cell wall layer.

It is found in the secreted. It localises to the cell wall. Its subcellular location is the membrane. Functionally, GPI-anchored cell wall protein involved in cell wall organization, hyphal growth, as well as in host-fungal interaction and virulence. In Candida albicans (strain SC5314 / ATCC MYA-2876) (Yeast), this protein is Cell wall protein IFF9 (IFF9).